The following is a 214-amino-acid chain: Cytochrome b (214 aa).

4 helical membrane-spanning segments follow: residues 31-51 (FGSMLLACLMIQTVTGFFLAI), 75-96 (WIMQNTHAIGASMFFMCIYTHI), 111-131 (WLSGTTLLIVLMRTAFFGYVL), and 176-196 (FFALHFILPFIIISLSSIHII). The heme b site is built by His81 and His95. 2 residues coordinate heme b: His180 and His194. His199 is an a ubiquinone binding site.

It belongs to the cytochrome b family. In terms of assembly, the cytochrome bc1 complex contains 3 respiratory subunits (MT-CYB, CYC1 and UQCRFS1), 2 core proteins (UQCRC1 and UQCRC2) and probably 6 low-molecular weight proteins. Heme b serves as cofactor.

It is found in the mitochondrion inner membrane. Functionally, component of the ubiquinol-cytochrome c reductase complex (complex III or cytochrome b-c1 complex) that is part of the mitochondrial respiratory chain. The b-c1 complex mediates electron transfer from ubiquinol to cytochrome c. Contributes to the generation of a proton gradient across the mitochondrial membrane that is then used for ATP synthesis. The protein is Cytochrome b (MT-CYB) of Cerastes cerastes (Horned desert viper).